The sequence spans 89 residues: Small ribosomal subunit protein uS17 (89 aa).

The protein belongs to the universal ribosomal protein uS17 family. As to quaternary structure, part of the 30S ribosomal subunit.

Its function is as follows. One of the primary rRNA binding proteins, it binds specifically to the 5'-end of 16S ribosomal RNA. The sequence is that of Small ribosomal subunit protein uS17 from Xanthomonas campestris pv. campestris (strain 8004).